We begin with the raw amino-acid sequence, 457 residues long: tRNA modification GTPase MnmE (457 aa).

(6S)-5-formyl-5,6,7,8-tetrahydrofolate-binding residues include arginine 25, glutamate 87, and arginine 126. Residues 223 to 377 form the TrmE-type G domain; sequence GISTAIIGRP…IEERINNLFF (155 aa). Residue asparagine 233 coordinates K(+). GTP is bound by residues 233-238, 252-258, and 277-280; these read NVGKSS, TDIAGTT, and DTAG. Serine 237 provides a ligand contact to Mg(2+). Residues threonine 252, isoleucine 254, and threonine 257 each contribute to the K(+) site. A Mg(2+)-binding site is contributed by threonine 258. Lysine 457 is a binding site for (6S)-5-formyl-5,6,7,8-tetrahydrofolate.

Belongs to the TRAFAC class TrmE-Era-EngA-EngB-Septin-like GTPase superfamily. TrmE GTPase family. As to quaternary structure, homodimer. Heterotetramer of two MnmE and two MnmG subunits. The cofactor is K(+).

It localises to the cytoplasm. In terms of biological role, exhibits a very high intrinsic GTPase hydrolysis rate. Involved in the addition of a carboxymethylaminomethyl (cmnm) group at the wobble position (U34) of certain tRNAs, forming tRNA-cmnm(5)s(2)U34. The sequence is that of tRNA modification GTPase MnmE from Streptococcus pneumoniae (strain Hungary19A-6).